The primary structure comprises 203 residues: Auxin-responsive protein IAA4 (203 aa).

A disordered region spans residues 1 to 31; it reads MEECKGGGMSPSSSMDSSTHPALSTTSSAAT. Residues 10-31 show a composition bias toward low complexity; the sequence is SPSSSMDSSTHPALSTTSSAAT. The short motif at 40–44 is the EAR-like (transcriptional repression) element; it reads LRLGL. Residues 108 to 202 enclose the PB1 domain; that stretch reads TLFVKVYMEG…KKLRIARMDK (95 aa).

The protein belongs to the Aux/IAA family. Homodimers and heterodimers.

The protein localises to the nucleus. Functionally, aux/IAA proteins are short-lived transcriptional factors that function as repressors of early auxin response genes at low auxin concentrations. This Oryza sativa subsp. japonica (Rice) protein is Auxin-responsive protein IAA4 (IAA4).